The chain runs to 272 residues: GPN-loop GTPase 3 (272 aa).

A GTP-binding site is contributed by 13–18; sequence GAGKST. The Gly-Pro-Asn (GPN)-loop; involved in dimer interface motif lies at 70-72; that stretch reads GPN. 173–176 is a binding site for GTP; it reads SKLD.

It belongs to the GPN-loop GTPase family. In terms of assembly, heterodimers with NPA3/GPN1 or GPN2. Binds to RNA polymerase II (RNAPII).

In terms of biological role, small GTPase required for proper nuclear localization of RNA polymerase II and III (RNAPII and RNAPIII). May act at an RNAP assembly step prior to nuclear import. Promotes sister chromatid separation during anaphase. In Saccharomyces cerevisiae (strain ATCC 204508 / S288c) (Baker's yeast), this protein is GPN-loop GTPase 3.